The primary structure comprises 283 residues: DegV domain-containing protein lin2658 (283 aa).

Residues 5-282 (IAVVTDSTTY…EGALGLTWSI (278 aa)) form the DegV domain. Positions 63 and 96 each coordinate hexadecanoate.

In terms of biological role, may bind long-chain fatty acids, such as palmitate, and may play a role in lipid transport or fatty acid metabolism. This chain is DegV domain-containing protein lin2658, found in Listeria innocua serovar 6a (strain ATCC BAA-680 / CLIP 11262).